The sequence spans 714 residues: Structure-specific endonuclease subunit SLX4 1 (714 aa).

Basic and acidic residues-rich tracts occupy residues 1–14 (MSPE…EDNL) and 24–34 (IHEETLAEESH). Disordered regions lie at residues 1–116 (MSPE…QGSI) and 337–369 (DSSG…KTPQ). Residues 36–46 (QSIQRSISRLS) are compositionally biased toward low complexity. Residues 79 to 92 (KTKKRKLKVSKPRK) are compositionally biased toward basic residues.

The protein belongs to the SLX4 family. In terms of assembly, forms a heterodimer with SLX1. Post-translationally, phosphorylated in response to DNA damage.

Its subcellular location is the nucleus. Regulatory subunit of the SLX1-SLX4 structure-specific endonuclease that resolves DNA secondary structures generated during DNA repair and recombination. Has endonuclease activity towards branched DNA substrates, introducing single-strand cuts in duplex DNA close to junctions with ss-DNA. The polypeptide is Structure-specific endonuclease subunit SLX4 1 (Candida tropicalis (strain ATCC MYA-3404 / T1) (Yeast)).